A 97-amino-acid polypeptide reads, in one-letter code: MKTLAILVLCSLAAICLTSSASAGAQPAGDSPVQGGLFMEKDQASAVVRQTRAAKELTLAQTESLREVCETNMACDEMADAQGIVAAYQAFYGPIPF.

The signal sequence occupies residues 1–18 (MKTLAILVLCSLAAICLT). The propeptide occupies 19–52 (SSASAGAQPAGDSPVQGGLFMEKDQASAVVRQTR). The 41-residue stretch at 53–93 (AAKELTLAQTESLREVCETNMACDEMADAQGIVAAYQAFYG) folds into the Gla domain. Ca(2+) is bound by residues glutamate 63, glutamate 67, glutamate 70, and aspartate 76. A 4-carboxyglutamate mark is found at glutamate 63, glutamate 67, and glutamate 70. A disulfide bridge connects residues cysteine 69 and cysteine 75. Position 77 is a 4-carboxyglutamate (glutamate 77).

The protein belongs to the osteocalcin/matrix Gla protein family. Gamma-carboxyglutamate residues are formed by vitamin K dependent carboxylation by GGCX. These residues are essential for the binding of calcium. In terms of tissue distribution, in the branchial arches, BGP is found outside the chondrocyte-containing zone. It is found in some cells in the basal zone of the branchial filaments, near the branchial arches, and within the extracellular matrix in the medial zone. In the vertebra, BGP is found in the mineralized bone matrix.

It localises to the secreted. Its function is as follows. The carboxylated form is one of the main organic components of the bone matrix, which constitutes 1-2% of the total bone protein. The carboxylated form binds strongly to apatite and calcium. The protein is Osteocalcin (bglap) of Argyrosomus regius (Meagre).